Reading from the N-terminus, the 56-residue chain is Envelope protein H3 (56 aa).

This sequence belongs to the orthopoxvirus OPG108 family. Post-translationally, does not contain disulfide bonds.

The protein localises to the virion membrane. Functionally, envelope protein that binds to heparan sulfate on the cell surface and might provide virion attachment to target cell. The polypeptide is Envelope protein H3 (OPG108) (Vaccinia virus (strain L-IVP) (VACV)).